The following is a 111-amino-acid chain: Nucleoid-associated protein Cpar_0834 (111 aa).

This sequence belongs to the YbaB/EbfC family. In terms of assembly, homodimer.

It is found in the cytoplasm. The protein resides in the nucleoid. In terms of biological role, binds to DNA and alters its conformation. May be involved in regulation of gene expression, nucleoid organization and DNA protection. The sequence is that of Nucleoid-associated protein Cpar_0834 from Chlorobaculum parvum (strain DSM 263 / NCIMB 8327) (Chlorobium vibrioforme subsp. thiosulfatophilum).